A 520-amino-acid polypeptide reads, in one-letter code: Maturase K (520 aa).

The protein belongs to the intron maturase 2 family. MatK subfamily.

The protein localises to the plastid. The protein resides in the chloroplast. Usually encoded in the trnK tRNA gene intron. Probably assists in splicing its own and other chloroplast group II introns. This is Maturase K from Galanthus elwesii (Giant snowdrop).